The following is a 174-amino-acid chain: CEN-like protein 1 (174 aa).

The protein belongs to the phosphatidylethanolamine-binding protein family. Expressed in vegetative axillary meristems but not in the main shoot meristem.

The protein localises to the cytoplasm. In terms of biological role, may form complexes with phosphorylated ligands by interfering with kinases and their effectors. This is CEN-like protein 1 (CET1) from Nicotiana tabacum (Common tobacco).